Here is a 337-residue protein sequence, read N- to C-terminus: MLFSALLLEVIWILAADGGQHWTYEGPHGQDHWPASYPECGNNAQSPIDIQTDSVTFDPDLPALQPHGYDQPGTEPLDLHNNGHTVQLSLPSTLYLGGLPRKYVAAQLHLHWGQKGSPGGSEHQINSEATFAELHIVHYDSDSYDSLSEAAERPQGLAVLGILIEVGETKNIAYEHILSHLHEVRHKDQKTSVPPFNLRELLPKQLGQYFRYNGSLTTPPCYQSVLWTVFYRRSQISMEQLEKLQGTLFSTEEEPSKLLVQNYRALQPLNQRMVFASFIQAGSSYTTGEMLSLGVGILVGCLCLLLAVYFIARKIRKKRLENRKSVVFTSAQATTEA.

The N-terminal stretch at 1–15 (MLFSALLLEVIWILA) is a signal peptide. Topologically, residues 16–290 (ADGGQHWTYE…AGSSYTTGEM (275 aa)) are extracellular. The Alpha-carbonic anhydrase domain occupies 20–278 (QHWTYEGPHG…LNQRMVFASF (259 aa)). A disulfide bridge links Cys40 with Cys221. His84 serves as the catalytic Proton donor/acceptor. His109, His111, and His135 together coordinate Zn(2+). Asn213 is a glycosylation site (N-linked (GlcNAc...) asparagine). 217-218 (TT) lines the substrate pocket. A helical transmembrane segment spans residues 291-311 (LSLGVGILVGCLCLLLAVYFI). The Cytoplasmic portion of the chain corresponds to 312-337 (ARKIRKKRLENRKSVVFTSAQATTEA). Ser325 carries the post-translational modification Phosphoserine.

It belongs to the alpha-carbonic anhydrase family. It depends on Zn(2+) as a cofactor. As to expression, high expression in all parts of the central nervous system and lower expression in adult liver, heart, small intestine, colon, kidney, urinary bladder and skeletal muscle.

The protein localises to the membrane. The enzyme catalyses hydrogencarbonate + H(+) = CO2 + H2O. Its activity is regulated as follows. Activated by histamine, L-adrenaline, L- and D-histidine, and L- and D-phenylalanine. Inhibited by coumarins, saccharin, sulfonamide derivatives such as acetazolamide (AZA) and Foscarnet (phosphonoformate trisodium salt). Its function is as follows. Reversible hydration of carbon dioxide. This is Carbonic anhydrase 14 (CA14) from Homo sapiens (Human).